Consider the following 101-residue polypeptide: MSRKSVIQRNLKRISICDRLKSKREKLRAIIKDQSISMNDRFLAQVKLSKLPRDSSYIRIRNRCLITGRPRGCYRKFKVSRIVLRQLGSIGQIPGLTKSSW.

Belongs to the universal ribosomal protein uS14 family. As to quaternary structure, part of the 30S ribosomal subunit. Contacts proteins S3 and S10.

In terms of biological role, binds 16S rRNA, required for the assembly of 30S particles and may also be responsible for determining the conformation of the 16S rRNA at the A site. This chain is Small ribosomal subunit protein uS14, found in Ehrlichia ruminantium (strain Welgevonden).